A 155-amino-acid chain; its full sequence is Ribonuclease H (155 aa).

The RNase H type-1 domain maps to 1–146 (MNALFAWTDG…ADELARAGMA (146 aa)). Positions 9, 52, 74, and 138 each coordinate Mg(2+).

Belongs to the RNase H family. In terms of assembly, monomer. Mg(2+) is required as a cofactor.

Its subcellular location is the cytoplasm. It catalyses the reaction Endonucleolytic cleavage to 5'-phosphomonoester.. In terms of biological role, endonuclease that specifically degrades the RNA of RNA-DNA hybrids. This is Ribonuclease H from Paracoccus denitrificans (strain Pd 1222).